A 251-amino-acid polypeptide reads, in one-letter code: D-aminoacyl-tRNA deacylase (251 aa).

The protein belongs to the DtdA deacylase family. In terms of assembly, monomer. Zn(2+) serves as cofactor.

The enzyme catalyses a D-aminoacyl-tRNA + H2O = a tRNA + a D-alpha-amino acid + H(+). The catalysed reaction is glycyl-tRNA(Ala) + H2O = tRNA(Ala) + glycine + H(+). In terms of biological role, D-aminoacyl-tRNA deacylase with broad substrate specificity. By recycling D-aminoacyl-tRNA to D-amino acids and free tRNA molecules, this enzyme counteracts the toxicity associated with the formation of D-aminoacyl-tRNA entities in vivo. The chain is D-aminoacyl-tRNA deacylase from Pyrobaculum aerophilum (strain ATCC 51768 / DSM 7523 / JCM 9630 / CIP 104966 / NBRC 100827 / IM2).